Here is a 350-residue protein sequence, read N- to C-terminus: Integrin beta-1-binding protein 2 (350 aa).

Zn(2+) contacts are provided by C5, C10, C24, and H27. One can recognise a CHORD 1 domain in the interval 5–64; the sequence is CYNKGCGQHFDPNTNLPDSCRYHPGVPIFHDALKGWSCCRKRTVDFSEFLNIKGCTVGLH. The SH3-binding motif lies at 28 to 31; it reads PGVP. Positions 42, 43, 59, and 64 each coordinate Zn(2+). Positions 70 to 79 match the SH3-binding motif; sequence PEVPPQPEGP. A disordered region spans residues 72–92; that stretch reads VPPQPEGPATSSLQEQKPLNT. Positions 80–92 are enriched in polar residues; the sequence is ATSSLQEQKPLNT. Zn(2+) is bound by residues C150 and C155. One can recognise a CHORD 2 domain in the interval 150-209; that stretch reads CQNPGCDAVYQGPESDATPCTYHPGAPRFHEGMKSWSCCGIQTLDFGAFLAQPGCRVGRH. The SH2-binding motif lies at 159 to 162; the sequence is YQGP. Zn(2+) contacts are provided by C169 and H172. Positions 173–176 match the SH3-binding motif; that stretch reads PGAP. Positions 187, 188, 204, and 209 each coordinate Zn(2+). Residues 216-305 enclose the CS domain; sequence PASCRHDWHQ…ADPGSWAQLE (90 aa). The short motif at 235-238 is the SH2-binding element; that stretch reads YGQI. Residues 317–350 form a disordered region; it reads GVLLEMDEEESEDSDDDLSWTEEEDEEEEEAMGE. Residues 321 to 350 show a composition bias toward acidic residues; the sequence is EMDEEESEDSDDDLSWTEEEDEEEEEAMGE.

As to quaternary structure, interacts with beta-1 integrin subunit. This interaction is regulated by divalent cations, and it occurs only in absence of calcium. In terms of tissue distribution, expressed in skeletal and cardiac muscles but not in other tissues. Is localized in rows flanking the Z line containing alpha-actinin.

May play a role during maturation and/or organization of muscles cells. The sequence is that of Integrin beta-1-binding protein 2 (Itgb1bp2) from Mus musculus (Mouse).